Consider the following 492-residue polypeptide: MIPENTGPAAVIVLAAGAGTRMKSRTPKILHEIGGRSMVGHALLAARSIEPRQLAIVVRHERDLVAGHVAELDPSAAIVDQDEVPGTGRAVEVALQALDAKEELTGTVVVTYGDVPLLSGGLLAELVATHEREANAVTVLTAVLDDATGYGRILRGEDGTVTGIREHKDSTDEERLIREVNSGIYAFDAAVLREALGKVTTDNAQGEKYLTDVLGLAREAGGRVAAVVTADRWQVEGANDRVQLAALGAELNRRTVEAWMRAGVTVVDPSTTWIDSSVTLDEDVRLLPNTQLHGSTSVARDAVVGPDTTLTDVEVGEGATVIRTHGSGSVIGPRAAVGPFTYLRPGTVLGEKGKIGAFYETKNVTIGRGSKLSHLGYAGDAEIGEDTNIGCGNITANYDGEKKHRTVIGSGVRTGSNTVFVAPVTVGDGAYSGAGAVIRKDVPAGALALSIAAQRNTEGWVPANRPGSRSAELAQAAINNSSSTPASTEEGK.

The pyrophosphorylase stretch occupies residues 1-241; the sequence is MIPENTGPAA…RWQVEGANDR (241 aa). Residues 14 to 17, Lys-28, Gln-81, 86 to 87, 112 to 114, Gly-151, Glu-166, Asn-181, and Asn-239 contribute to the UDP-N-acetyl-alpha-D-glucosamine site; these read LAAG, GT, and YGD. Mg(2+) is bound at residue Asp-114. A Mg(2+)-binding site is contributed by Asn-239. Residues 242 to 262 are linker; the sequence is VQLAALGAELNRRTVEAWMRA. An N-acetyltransferase region spans residues 263–492; sequence GVTVVDPSTT…STPASTEEGK (230 aa). The UDP-N-acetyl-alpha-D-glucosamine site is built by Arg-344 and Lys-362. His-374 functions as the Proton acceptor in the catalytic mechanism. Positions 377 and 388 each coordinate UDP-N-acetyl-alpha-D-glucosamine. Residues 397–398, Ser-416, and Ala-434 contribute to the acetyl-CoA site; that span reads NY. A disordered region spans residues 460–492; the sequence is WVPANRPGSRSAELAQAAINNSSSTPASTEEGK. The span at 477–492 shows a compositional bias: polar residues; the sequence is AINNSSSTPASTEEGK.

It in the N-terminal section; belongs to the N-acetylglucosamine-1-phosphate uridyltransferase family. The protein in the C-terminal section; belongs to the transferase hexapeptide repeat family. As to quaternary structure, homotrimer. It depends on Mg(2+) as a cofactor.

The protein resides in the cytoplasm. The enzyme catalyses alpha-D-glucosamine 1-phosphate + acetyl-CoA = N-acetyl-alpha-D-glucosamine 1-phosphate + CoA + H(+). The catalysed reaction is N-acetyl-alpha-D-glucosamine 1-phosphate + UTP + H(+) = UDP-N-acetyl-alpha-D-glucosamine + diphosphate. Its pathway is nucleotide-sugar biosynthesis; UDP-N-acetyl-alpha-D-glucosamine biosynthesis; N-acetyl-alpha-D-glucosamine 1-phosphate from alpha-D-glucosamine 6-phosphate (route II): step 2/2. It participates in nucleotide-sugar biosynthesis; UDP-N-acetyl-alpha-D-glucosamine biosynthesis; UDP-N-acetyl-alpha-D-glucosamine from N-acetyl-alpha-D-glucosamine 1-phosphate: step 1/1. It functions in the pathway bacterial outer membrane biogenesis; LPS lipid A biosynthesis. Functionally, catalyzes the last two sequential reactions in the de novo biosynthetic pathway for UDP-N-acetylglucosamine (UDP-GlcNAc). The C-terminal domain catalyzes the transfer of acetyl group from acetyl coenzyme A to glucosamine-1-phosphate (GlcN-1-P) to produce N-acetylglucosamine-1-phosphate (GlcNAc-1-P), which is converted into UDP-GlcNAc by the transfer of uridine 5-monophosphate (from uridine 5-triphosphate), a reaction catalyzed by the N-terminal domain. The protein is Bifunctional protein GlmU of Pseudarthrobacter chlorophenolicus (strain ATCC 700700 / DSM 12829 / CIP 107037 / JCM 12360 / KCTC 9906 / NCIMB 13794 / A6) (Arthrobacter chlorophenolicus).